A 608-amino-acid chain; its full sequence is Threonine--tRNA ligase (608 aa).

The segment at 1-143 (MRVLYIHAER…VFKPEEAKTE (143 aa)) is editing domain. 2 catalytic regions span residues 194-490 (PKYL…PRLP) and 195-490 (KYLD…PRLP). Residues cysteine 287, histidine 338, and histidine 459 each contribute to the Zn(2+) site.

It belongs to the class-II aminoacyl-tRNA synthetase family. As to quaternary structure, homodimer. The cofactor is Zn(2+).

Its subcellular location is the cytoplasm. The catalysed reaction is tRNA(Thr) + L-threonine + ATP = L-threonyl-tRNA(Thr) + AMP + diphosphate + H(+). Its function is as follows. Catalyzes the attachment of threonine to tRNA(Thr) in a two-step reaction: L-threonine is first activated by ATP to form Thr-AMP and then transferred to the acceptor end of tRNA(Thr). Also edits incorrectly charged L-seryl-tRNA(Thr). The sequence is that of Threonine--tRNA ligase from Pyrobaculum arsenaticum (strain DSM 13514 / JCM 11321 / PZ6).